The following is an 84-amino-acid chain: Esculentin-1B (84 aa).

The N-terminal stretch at 1 to 22 (MFTLKKPLLLIVLLGMISLSLC) is a signal peptide. Positions 23–38 (EQERNADEEEGSEIKR) are excised as a propeptide. The cysteines at positions 78 and 84 are disulfide-linked.

The protein belongs to the frog skin active peptide (FSAP) family. Brevinin subfamily. Expressed by the skin glands.

The protein localises to the secreted. Functionally, shows antibacterial activity against representative Gram-negative and Gram-positive bacterial species, and hemolytic activity. The polypeptide is Esculentin-1B (Pelophylax lessonae (Pool frog)).